A 309-amino-acid polypeptide reads, in one-letter code: Assembly-complementing factor 4 (309 aa).

Disordered regions lie at residues 1 to 80, 164 to 240, and 286 to 309; these read MSED…ASPI, KSIN…ENTP, and VRSE…LFKR. Composition is skewed to basic and acidic residues over residues 13-24 and 34-44; these read ELHKLSIVDKHS and KQHEVQPESKS. 5 positions are modified to phosphoserine: Ser44, Ser71, Ser74, Ser78, and Ser165. Residues 61 to 80 are compositionally biased toward polar residues; that stretch reads SSPQRSTTNQSPVSDHASPI. 3 stretches are compositionally biased toward low complexity: residues 174–188, 205–214, and 222–239; these read NNNV…LPNR, PSRSSESTPT, and PRNT…GENT. Over residues 287 to 298 the composition is skewed to acidic residues; that stretch reads RSEDEDDEEFEP. The residue at position 288 (Ser288) is a Phosphoserine.

Its function is as follows. May be involved in actin cytoskeleton organization and biogenesis. The sequence is that of Assembly-complementing factor 4 (ACF4) from Saccharomyces cerevisiae (strain ATCC 204508 / S288c) (Baker's yeast).